The following is a 485-amino-acid chain: Glutamyl-tRNA(Gln) amidotransferase subunit A (485 aa).

Catalysis depends on charge relay system residues K78 and S153. Catalysis depends on S177, which acts as the Acyl-ester intermediate.

This sequence belongs to the amidase family. GatA subfamily. As to quaternary structure, heterotrimer of A, B and C subunits.

It catalyses the reaction L-glutamyl-tRNA(Gln) + L-glutamine + ATP + H2O = L-glutaminyl-tRNA(Gln) + L-glutamate + ADP + phosphate + H(+). Its function is as follows. Allows the formation of correctly charged Gln-tRNA(Gln) through the transamidation of misacylated Glu-tRNA(Gln) in organisms which lack glutaminyl-tRNA synthetase. The reaction takes place in the presence of glutamine and ATP through an activated gamma-phospho-Glu-tRNA(Gln). This is Glutamyl-tRNA(Gln) amidotransferase subunit A from Bacillus anthracis (strain A0248).